Here is an 843-residue protein sequence, read N- to C-terminus: Vacuolar membrane protease (843 aa).

The Cytoplasmic portion of the chain corresponds to 1-16 (MTNSRRHIFERICAKA). Residues 17–37 (FQSSLTCSIFGFTVLLILYLL) traverse the membrane as a helical segment. Topologically, residues 38–347 (DWKRIAQVPG…LAFGKYWQLN (310 aa)) are vacuolar. 3 N-linked (GlcNAc...) asparagine glycosylation sites follow: Asn-96, Asn-109, and Asn-117. Zn(2+)-binding residues include His-147 and Asp-159. The active-site Proton acceptor is Glu-191. Glu-192 contributes to the Zn(2+) binding site. Asn-209 is a glycosylation site (N-linked (GlcNAc...) asparagine). A Zn(2+)-binding site is contributed by Glu-217. A glycan (N-linked (GlcNAc...) asparagine) is linked at Asn-275. A Zn(2+)-binding site is contributed by His-292. N-linked (GlcNAc...) asparagine glycosylation is present at Asn-322. The helical transmembrane segment at 348–368 (LPIYQVLNIIFAVICPIVLLL) threads the bilayer. Residues 369 to 386 (TLIRFPSLYEQLKKPRYT) are Cytoplasmic-facing. A helical membrane pass occupies residues 387–407 (VCFVVSCIFVSIFDTLTVLLL). The Vacuolar segment spans residues 408–417 (TWINPYVINS). Residues 418-438 (HTGLILALFYLTNLIALAFSF) traverse the membrane as a helical segment. The Cytoplasmic segment spans residues 439 to 456 (RAAATHSKLSSEDLSSIE). The chain crosses the membrane as a helical span at residues 457–477 (IVFIWYAQILWYLVFIVSVIL). At 478–484 (SIYFQLG) the chain is on the vacuolar side. The helical transmembrane segment at 485–505 (STYWVTLSYLCTFTCCIMTII) threads the bilayer. At 506–566 (RINYFVDNVV…NRAHVKLIDN (61 aa)) the chain is on the cytoplasmic side. The helical transmembrane segment at 567–587 (IWTVIYFIFNVPFPVFLCYDI) threads the bilayer. The Vacuolar portion of the chain corresponds to 588 to 608 (LVETILPAGSQTLTDSVFSSK). Residues 609–629 (LYKLVIFVVFLSLVNSGPFIF) traverse the membrane as a helical segment. Residues 630–636 (RALSKKS) lie on the Cytoplasmic side of the membrane. Residues 637-657 (LAVLTMLWITLFVQALSVNPF) form a helical membrane-spanning segment. Over 658 to 843 (TESAPLKLSF…LLKVKSSIVI (186 aa)) the chain is Vacuolar. 5 N-linked (GlcNAc...) asparagine glycosylation sites follow: Asn-677, Asn-703, Asn-707, Asn-754, and Asn-788.

It belongs to the peptidase M28 family. Zn(2+) serves as cofactor.

Its subcellular location is the membrane. It localises to the vacuole membrane. May be involved in vacuolar sorting and osmoregulation. The sequence is that of Vacuolar membrane protease from Schizosaccharomyces pombe (strain 972 / ATCC 24843) (Fission yeast).